A 314-amino-acid polypeptide reads, in one-letter code: Olfactory receptor 5P62 (314 aa).

Topologically, residues 1 to 28 (MAFIYNGSQTTVTEFILLGLTDDPVLKV) are extracellular. The N-linked (GlcNAc...) asparagine glycan is linked to N6. The helical transmembrane segment at 29 to 49 (ILFCIILCIYLVTVFGNLSTI) threads the bilayer. Over 50-57 (LLIGVSSK) the chain is Cytoplasmic. A helical membrane pass occupies residues 58 to 78 (LHHPMYFFLSHLASVDMGLSS). Topologically, residues 79 to 102 (SVTPNMLVNFLTEKNTISYLGCGI) are extracellular. Residues C100 and C192 are joined by a disulfide bond. The helical transmembrane segment at 103-123 (QLSSAAFFGAVEFFLLAAMAY) threads the bilayer. Residues 124–136 (DRLVAICNPLLYS) are Cytoplasmic-facing. A helical transmembrane segment spans residues 137–157 (TKMSSQVCIQLVAGSYVGGFL). Residues 158–199 (NASFVTHFFFSFLFCGPNRVNHFFCDLSPMMELSCSDVSISE) are Extracellular-facing. A helical membrane pass occupies residues 200–220 (IVISFSAGSFTMTTLFVIVIP). Over 221-240 (YFYIFITILKIRSTEGRQKA) the chain is Cytoplasmic. The chain crosses the membrane as a helical span at residues 241 to 261 (FSTCTSHLTAVTLYYGTIIFI). Residues 262 to 274 (YVMPKSTYSRDQN) are Extracellular-facing. Residues 275–295 (KVVSLFYMLVIPVLNPLIYSL) form a helical membrane-spanning segment. Residues 296–314 (RNNEIKDALKRQFYRKTLL) lie on the Cytoplasmic side of the membrane.

Belongs to the G-protein coupled receptor 1 family.

It localises to the cell membrane. Its function is as follows. Potential odorant receptor. The sequence is that of Olfactory receptor 5P62 from Mus musculus (Mouse).